A 250-amino-acid chain; its full sequence is Indole-3-glycerol phosphate synthase (250 aa).

The protein belongs to the TrpC family.

It catalyses the reaction 1-(2-carboxyphenylamino)-1-deoxy-D-ribulose 5-phosphate + H(+) = (1S,2R)-1-C-(indol-3-yl)glycerol 3-phosphate + CO2 + H2O. Its pathway is amino-acid biosynthesis; L-tryptophan biosynthesis; L-tryptophan from chorismate: step 4/5. The sequence is that of Indole-3-glycerol phosphate synthase from Picrophilus torridus (strain ATCC 700027 / DSM 9790 / JCM 10055 / NBRC 100828 / KAW 2/3).